The primary structure comprises 623 residues: UvrABC system protein C (623 aa).

The 80-residue stretch at 12–91 folds into the GIY-YIG domain; that stretch reads FSPGVYLYKD…IKQYKPRFNI (80 aa). Residues 201 to 236 enclose the UVR domain; the sequence is SDLARGLRARMEAASLEMRFEEAAGLRDLITTVEEI. Positions 604 to 623 are disordered; that stretch reads PVASVAQSEDAAPDVPDPQA.

It belongs to the UvrC family. As to quaternary structure, interacts with UvrB in an incision complex.

The protein resides in the cytoplasm. Its function is as follows. The UvrABC repair system catalyzes the recognition and processing of DNA lesions. UvrC both incises the 5' and 3' sides of the lesion. The N-terminal half is responsible for the 3' incision and the C-terminal half is responsible for the 5' incision. This Solibacter usitatus (strain Ellin6076) protein is UvrABC system protein C.